A 133-amino-acid chain; its full sequence is Small ribosomal subunit protein uS8 (133 aa).

Belongs to the universal ribosomal protein uS8 family. Part of the 30S ribosomal subunit.

Functionally, one of the primary rRNA binding proteins, it binds directly to 16S rRNA central domain where it helps coordinate assembly of the platform of the 30S subunit. The sequence is that of Small ribosomal subunit protein uS8 from Ignicoccus hospitalis (strain KIN4/I / DSM 18386 / JCM 14125).